The chain runs to 223 residues: MNIAKLIDHTILKANATKEDVMKVIEEAKEYKFASVCINPTWVKLAAEELAGHDVDVCTVIGFPLGASTTETKAFETKDAIAKGATEVDMVINVGALKDGDDELVEKDIYEVVQAAKGKALVKVIIETCLLTDEEKVRACELSVKAGADFVKTSTGFSTGGATAEDIALMRKTVGPNVGVKASGGVRTREDADKMVAAGASRIGASASVAIVLNDAKGATDNY.

Aspartate 89 (proton donor/acceptor) is an active-site residue. Lysine 152 functions as the Schiff-base intermediate with acetaldehyde in the catalytic mechanism. Lysine 181 serves as the catalytic Proton donor/acceptor.

It belongs to the DeoC/FbaB aldolase family. DeoC type 1 subfamily.

Its subcellular location is the cytoplasm. It carries out the reaction 2-deoxy-D-ribose 5-phosphate = D-glyceraldehyde 3-phosphate + acetaldehyde. It participates in carbohydrate degradation; 2-deoxy-D-ribose 1-phosphate degradation; D-glyceraldehyde 3-phosphate and acetaldehyde from 2-deoxy-alpha-D-ribose 1-phosphate: step 2/2. Functionally, catalyzes a reversible aldol reaction between acetaldehyde and D-glyceraldehyde 3-phosphate to generate 2-deoxy-D-ribose 5-phosphate. The protein is Deoxyribose-phosphate aldolase of Bacillus cereus (strain Q1).